Here is a 293-residue protein sequence, read N- to C-terminus: MAEGRIIKALSGFYYVQSDNQQFVCKGRGLFRNKKITPLVGDYVEFEPKDDNEGYIMEIKERSNELVRPPIANIDQAIIVSSAVDPDFTTLLLDRFLVLIESKHIQPIILITKVDLLNEDQLENIKLYKQHYEKIGYRVELVSSKNQDLLPELEPYFDEKVSVFAGQSGVGKSSLINVLDPSLLLETAEISKSLGRGKHTTRHVELMKIGNGLVADTPGFSVLEFREIEAEELADSFPEFNARMHLCKFRGCMHDKEPKCAVKEAVENEEIAVFRYNHYLRFLEEIQTRKPRY.

In terms of domain architecture, CP-type G spans 63–223 (SNELVRPPIA…VADTPGFSVL (161 aa)). GTP contacts are provided by residues 112–115 (TKVD) and 166–174 (GQSGVGKSS). Positions 247, 252, 254, and 260 each coordinate Zn(2+).

Belongs to the TRAFAC class YlqF/YawG GTPase family. RsgA subfamily. Monomer. Associates with 30S ribosomal subunit, binds 16S rRNA. The cofactor is Zn(2+).

Its subcellular location is the cytoplasm. Functionally, one of several proteins that assist in the late maturation steps of the functional core of the 30S ribosomal subunit. Helps release RbfA from mature subunits. May play a role in the assembly of ribosomal proteins into the subunit. Circularly permuted GTPase that catalyzes slow GTP hydrolysis, GTPase activity is stimulated by the 30S ribosomal subunit. The protein is Small ribosomal subunit biogenesis GTPase RsgA 2 of Oceanobacillus iheyensis (strain DSM 14371 / CIP 107618 / JCM 11309 / KCTC 3954 / HTE831).